The primary structure comprises 697 residues: Potassium-transporting ATPase ATP-binding subunit (697 aa).

4 helical membrane passes run 55–75 (PIMF…FLPS), 79–99 (SIPG…VLFA), 245–265 (LTLI…YLGF), and 271–291 (VLVA…LSAI). Asp-324 functions as the 4-aspartylphosphate intermediate in the catalytic mechanism. ATP-binding positions include Asp-361, Glu-365, 393-400 (FKAETRMS), and Lys-412. Residues Asp-535 and Asp-539 each coordinate Mg(2+). 3 helical membrane-spanning segments follow: residues 605–625 (FAII…LNIM), 633–653 (AILS…PLAM), and 677–697 (GGVI…GLFI).

Belongs to the cation transport ATPase (P-type) (TC 3.A.3) family. Type IA subfamily. The system is composed of three essential subunits: KdpA, KdpB and KdpC.

It localises to the cell membrane. It catalyses the reaction K(+)(out) + ATP + H2O = K(+)(in) + ADP + phosphate + H(+). In terms of biological role, part of the high-affinity ATP-driven potassium transport (or Kdp) system, which catalyzes the hydrolysis of ATP coupled with the electrogenic transport of potassium into the cytoplasm. This subunit is responsible for energy coupling to the transport system and for the release of the potassium ions to the cytoplasm. The sequence is that of Potassium-transporting ATPase ATP-binding subunit from Bacillus cereus (strain B4264).